A 649-amino-acid polypeptide reads, in one-letter code: Acid beta-fructofuranosidase (649 aa).

Residues 1-22 (MEHHKPLLPTSSHAAPTSSTRK) lie on the Cytoplasmic side of the membrane. Residues 1–101 (MEHHKPLLPT…NLLFAGEGGA (101 aa)) constitute a propeptide, removed in mature form. Residues 23-43 (DLLFVLCGLLFLSSLVAYGGY) traverse the membrane as a helical; Signal-anchor for type II membrane protein segment. The Lumenal segment spans residues 44 to 649 (RASGVPHAHL…PFPFNPDQKS (606 aa)). Positions 52–75 (HLSSPTSNHQQDHQSPTSLPSSKW) are disordered. Residues 54–72 (SSPTSNHQQDHQSPTSLPS) are compositionally biased toward polar residues. Residues 127–130 (WMND), Gln146, Trp154, and 189–190 (WT) contribute to the substrate site. Asp130 is a catalytic residue. Residue Asn210 is glycosylated (N-linked (GlcNAc...) (complex) asparagine). 253-254 (RD) serves as a coordination point for substrate. The N-linked (GlcNAc...) (complex) asparagine glycan is linked to Asn275. Substrate contacts are provided by Glu308 and Asp341. Cys498 and Cys546 are oxidised to a cystine. A glycan (N-linked (GlcNAc...) (high mannose) asparagine) is linked at Asn618.

The protein belongs to the glycosyl hydrolase 32 family. Present in two forms, a 70 kDa monomer and a heterodimer of the 30 kDa and 38 kDa subunits. The ratio of the levels of the two forms within cells appears to be regulated developmentally.

It is found in the membrane. Its subcellular location is the vacuole lumen. The catalysed reaction is Hydrolysis of terminal non-reducing beta-D-fructofuranoside residues in beta-D-fructofuranosides.. It participates in glycan biosynthesis; sucrose metabolism. In terms of biological role, possible role in the continued mobilization of sucrose to sink organs. This is Acid beta-fructofuranosidase (INVA) from Vigna radiata var. radiata (Mung bean).